Here is a 180-residue protein sequence, read N- to C-terminus: ATP synthase subunit delta (180 aa).

Belongs to the ATPase delta chain family. As to quaternary structure, F-type ATPases have 2 components, F(1) - the catalytic core - and F(0) - the membrane proton channel. F(1) has five subunits: alpha(3), beta(3), gamma(1), delta(1), epsilon(1). F(0) has three main subunits: a(1), b(2) and c(10-14). The alpha and beta chains form an alternating ring which encloses part of the gamma chain. F(1) is attached to F(0) by a central stalk formed by the gamma and epsilon chains, while a peripheral stalk is formed by the delta and b chains.

The protein resides in the cell membrane. Functionally, f(1)F(0) ATP synthase produces ATP from ADP in the presence of a proton or sodium gradient. F-type ATPases consist of two structural domains, F(1) containing the extramembraneous catalytic core and F(0) containing the membrane proton channel, linked together by a central stalk and a peripheral stalk. During catalysis, ATP synthesis in the catalytic domain of F(1) is coupled via a rotary mechanism of the central stalk subunits to proton translocation. This protein is part of the stalk that links CF(0) to CF(1). It either transmits conformational changes from CF(0) to CF(1) or is implicated in proton conduction. The protein is ATP synthase subunit delta of Enterococcus hirae (strain ATCC 9790 / DSM 20160 / JCM 8729 / LMG 6399 / NBRC 3181 / NCIMB 6459 / NCDO 1258 / NCTC 12367 / WDCM 00089 / R).